The chain runs to 252 residues: Small ribosomal subunit protein uS2 (252 aa).

It belongs to the universal ribosomal protein uS2 family.

This Ruminiclostridium cellulolyticum (strain ATCC 35319 / DSM 5812 / JCM 6584 / H10) (Clostridium cellulolyticum) protein is Small ribosomal subunit protein uS2.